Consider the following 240-residue polypeptide: Lactate utilization protein C (240 aa).

The protein belongs to the LutC/YkgG family.

Its function is as follows. Is involved in L-lactate degradation and allows cells to grow with lactate as the sole carbon source. This Bacillus licheniformis (strain ATCC 14580 / DSM 13 / JCM 2505 / CCUG 7422 / NBRC 12200 / NCIMB 9375 / NCTC 10341 / NRRL NRS-1264 / Gibson 46) protein is Lactate utilization protein C.